The chain runs to 370 residues: Chloromuconate cycloisomerase (370 aa).

Residue Lys165 is the Proton acceptor of the active site. Positions 194, 220, and 245 each coordinate Mn(2+). Glu323 functions as the Proton donor in the catalytic mechanism.

Belongs to the mandelate racemase/muconate lactonizing enzyme family. Mn(2+) is required as a cofactor.

The enzyme catalyses 2-[(2R)-2-chloro-2,5-dihydro-5-oxofuryl]acetate = 3-chloro-cis,cis-muconate + H(+). It participates in aromatic compound metabolism; 3-chlorocatechol degradation. The protein is Chloromuconate cycloisomerase (tcbD) of Pseudomonas sp. (strain P51).